Reading from the N-terminus, the 426-residue chain is Elongation factor 1-alpha (426 aa).

The tr-type G domain maps to Lys5 to Thr221. The segment at Gly14–Ser21 is G1. Position 14-21 (Gly14–Ser21) interacts with GTP. A Mg(2+)-binding site is contributed by Ser21. Positions Gly70 to Asp74 are G2. A G3 region spans residues Asp91–Gly94. GTP contacts are provided by residues Asp91–His95 and Asn146–Asp149. The interval Asn146–Asp149 is G4. The tract at residues Ser185–Phe187 is G5.

The protein belongs to the TRAFAC class translation factor GTPase superfamily. Classic translation factor GTPase family. EF-Tu/EF-1A subfamily.

Its subcellular location is the cytoplasm. The catalysed reaction is GTP + H2O = GDP + phosphate + H(+). GTP hydrolase that promotes the GTP-dependent binding of aminoacyl-tRNA to the A-site of ribosomes during protein biosynthesis. This Methanosphaerula palustris (strain ATCC BAA-1556 / DSM 19958 / E1-9c) protein is Elongation factor 1-alpha.